The sequence spans 136 residues: Basic phospholipase A2 Tgc-K49 (136 aa).

The N-terminal stretch at 1-15 is a signal peptide; it reads MRTLWIVAVLLVGEG. 7 disulfide bridges follow: Cys41-Cys130, Cys43-Cys59, Cys58-Cys110, Cys64-Cys136, Cys65-Cys103, Cys72-Cys96, and Cys90-Cys101. His62 is an active-site residue. Asp104 is an active-site residue.

The protein belongs to the phospholipase A2 family. Group II subfamily. K49 sub-subfamily. Expressed by the venom gland.

The protein resides in the secreted. It carries out the reaction a 1,2-diacyl-sn-glycero-3-phosphocholine + H2O = a 1-acyl-sn-glycero-3-phosphocholine + a fatty acid + H(+). Its function is as follows. PLA2 catalyzes the calcium-dependent hydrolysis of the 2-acyl groups in 3-sn-phosphoglycerides. The polypeptide is Basic phospholipase A2 Tgc-K49 (Trimeresurus gracilis (Kikuchi habu)).